We begin with the raw amino-acid sequence, 317 residues long: Probable arabinan endo-1,5-alpha-L-arabinosidase C (317 aa).

The signal sequence occupies residues 1-17 (MLSFLAALSLPLALVNA). The active-site Proton acceptor is the D32. An N-linked (GlcNAc...) asparagine glycan is attached at N190. The active-site Proton donor is the E198.

It belongs to the glycosyl hydrolase 43 family.

It is found in the secreted. It carries out the reaction Endohydrolysis of (1-&gt;5)-alpha-arabinofuranosidic linkages in (1-&gt;5)-arabinans.. It participates in glycan metabolism; L-arabinan degradation. Endo-1,5-alpha-L-arabinanase involved in degradation of pectin. Its preferred substrate is linear 1,5-alpha-L-arabinan. The sequence is that of Probable arabinan endo-1,5-alpha-L-arabinosidase C (abnC) from Aspergillus flavus (strain ATCC 200026 / FGSC A1120 / IAM 13836 / NRRL 3357 / JCM 12722 / SRRC 167).